The following is a 235-amino-acid chain: MDIKINDFEGPLDLLLHLVSKYQMDIYQVPIVAVIEQYLAYIETLQAMKLEVAGEYMVMASQLMLIKSRRLLPTITEVSSEELDPEEDLLSKIEEYSRFKELSQQLGYQHDQRALLFSKPKQELIFEDAVLNEDKSITDLFLAFSKIMAIKQEEVKNNHTVIERDDFRIEDMMDHLDTVLNAKTEITLSEVFKDCTSINEVITMFLATLELIKIQAVTVFQEDNFSDIILRKENR.

It belongs to the ScpA family. In terms of assembly, component of a cohesin-like complex composed of ScpA, ScpB and the Smc homodimer, in which ScpA and ScpB bind to the head domain of Smc. The presence of the three proteins is required for the association of the complex with DNA.

It localises to the cytoplasm. Functionally, participates in chromosomal partition during cell division. May act via the formation of a condensin-like complex containing Smc and ScpB that pull DNA away from mid-cell into both cell halves. The chain is Segregation and condensation protein A from Streptococcus uberis (strain ATCC BAA-854 / 0140J).